We begin with the raw amino-acid sequence, 434 residues long: Glutamate-1-semialdehyde 2,1-aminomutase (434 aa).

Lysine 273 carries the post-translational modification N6-(pyridoxal phosphate)lysine.

Belongs to the class-III pyridoxal-phosphate-dependent aminotransferase family. HemL subfamily. In terms of assembly, homodimer. Pyridoxal 5'-phosphate serves as cofactor.

The protein resides in the cytoplasm. It catalyses the reaction (S)-4-amino-5-oxopentanoate = 5-aminolevulinate. It functions in the pathway porphyrin-containing compound metabolism; protoporphyrin-IX biosynthesis; 5-aminolevulinate from L-glutamyl-tRNA(Glu): step 2/2. The polypeptide is Glutamate-1-semialdehyde 2,1-aminomutase (Polynucleobacter asymbioticus (strain DSM 18221 / CIP 109841 / QLW-P1DMWA-1) (Polynucleobacter necessarius subsp. asymbioticus)).